The following is a 1401-amino-acid chain: DNA-directed RNA polymerase subunit beta' (1401 aa).

Zn(2+) contacts are provided by Cys-70, Cys-72, Cys-85, and Cys-88. 3 residues coordinate Mg(2+): Asp-460, Asp-462, and Asp-464. Zn(2+) contacts are provided by Cys-814, Cys-888, Cys-895, and Cys-898. The disordered stretch occupies residues 1369–1388 (RQKQKAVEQEGPSAEQATDN).

The protein belongs to the RNA polymerase beta' chain family. The RNAP catalytic core consists of 2 alpha, 1 beta, 1 beta' and 1 omega subunit. When a sigma factor is associated with the core the holoenzyme is formed, which can initiate transcription. Mg(2+) is required as a cofactor. It depends on Zn(2+) as a cofactor.

It carries out the reaction RNA(n) + a ribonucleoside 5'-triphosphate = RNA(n+1) + diphosphate. Its function is as follows. DNA-dependent RNA polymerase catalyzes the transcription of DNA into RNA using the four ribonucleoside triphosphates as substrates. The chain is DNA-directed RNA polymerase subunit beta' from Aliivibrio fischeri (strain ATCC 700601 / ES114) (Vibrio fischeri).